Here is a 107-residue protein sequence, read N- to C-terminus: uncharacterized protein (107 aa).

This is an uncharacterized protein from Acidianus bottle-shaped virus (isolate Italy/Pozzuoli) (ABV).